A 919-amino-acid polypeptide reads, in one-letter code: Hyphally regulated cell wall protein 1 (919 aa).

An N-terminal signal peptide occupies residues 1-20 (MKVVSNFIFTILLTLNLSAA). Asn-236 is a glycosylation site (N-linked (GlcNAc...) asparagine). The disordered stretch occupies residues 332–483 (SAPESESDLN…QSITSSPGQS (152 aa)). The segment covering 344-392 (TTSSIETSSYSSAATESSVVSESSSAVDSLTSSSLSSKSESSDVVSSTT) has biased composition (low complexity). A compositionally biased stretch (polar residues) spans 393-414 (NIESSSTAIETTMNSESSTDAG). Residues 415-475 (SSSISQSESS…SNALSSTEQS (61 aa)) are compositionally biased toward low complexity. Asn-449, Asn-488, Asn-580, Asn-585, Asn-607, Asn-619, Asn-631, Asn-639, Asn-647, and Asn-693 each carry an N-linked (GlcNAc...) asparagine glycan. The segment covering 567–590 (DATTTTTTSTGGDNSTGGNESGSN) has biased composition (low complexity). A disordered region spans residues 567–839 (DATTTTTTST…VANPVTTSTE (273 aa)). Composition is skewed to gly residues over residues 607 to 665 (NGSG…GSGS) and 675 to 707 (EGSG…GSGS). Residues 708 to 724 (QSGSESGSNSGSNEGSN) show a composition bias toward low complexity. The span at 725–783 (PGAGNGSNEGSGQGSGNGSEAGSGQGSGPNNGSGSGHNDGSGSGSNQGSNPGAGSGSGS) shows a compositional bias: gly residues. Asn-729, Asn-741, and Asn-755 each carry an N-linked (GlcNAc...) asparagine glycan. The segment covering 784–798 (ESGSNAGSHSGSNEG) has biased composition (low complexity). The segment covering 799-811 (AKTDSIEGFHTES) has biased composition (basic and acidic residues). The span at 823–833 (ATVTGNSVANP) shows a compositional bias: polar residues. 2 N-linked (GlcNAc...) asparagine glycosylation sites follow: Asn-879 and Asn-895. The GPI-anchor amidated asparagine moiety is linked to residue Asn-895. The propeptide at 896–919 (GSSIVTGGKSILFGLIVSMVVLFM) is removed in mature form.

This sequence belongs to the HYR1/IFF family. In terms of assembly, component of a multiprotein complex of 250 kDa composed of at least HYR1, MP65, and PRA1. The GPI-anchor is attached to the protein in the endoplasmic reticulum and serves to target the protein to the cell surface. There, the glucosamine-inositol phospholipid moiety is cleaved off and the GPI-modified mannoprotein is covalently attached via its lipidless GPI glycan remnant to the 1,6-beta-glucan of the outer cell wall layer.

The protein localises to the secreted. It localises to the cell wall. The protein resides in the membrane. In terms of biological role, GPI-anchored hyphal cell wall protein required for hyphal growth and virulence. Involved in innate immune cell evasion through conferring resistance to neutrophil killing. Binds kininogen, the proteinaceous kinin precursor, and contributes to trigger the kinin-forming cascade on the cell surface. Production of kinins is often involved in the human host defense against microbial infections. The protein is Hyphally regulated cell wall protein 1 (HYR1) of Candida albicans (strain SC5314 / ATCC MYA-2876) (Yeast).